The following is a 531-amino-acid chain: Beta-hexosaminidase subunit beta (531 aa).

Residues 1–24 (MRHRGLGLAALLALLAAVAPRSSA) form the signal peptide. Asparagine 50 carries N-linked (GlcNAc...) asparagine glycosylation. Cysteine 65 and cysteine 111 are disulfide-bonded. Residues asparagine 116, asparagine 164, and asparagine 301 are each glycosylated (N-linked (GlcNAc...) asparagine). Intrachain disulfides connect cysteine 283-cysteine 334 and cysteine 508-cysteine 525. Glutamate 329 acts as the Proton donor in catalysis.

The protein belongs to the glycosyl hydrolase 20 family. As to quaternary structure, there are 3 forms of beta-hexosaminidase: hexosaminidase A is a heterodimer composed of one subunit alpha and one subunit beta (chain A and B); hexosaminidase B is a homodimer of two beta subunits (two chains A and B); hexosaminidase S is a homodimer of two alpha subunits. The composition of the dimer (isozyme A versus isozyme S) has a significant effect on the substrate specificity of the alpha subunit active site.

It localises to the lysosome. The protein resides in the cytoplasmic vesicle. Its subcellular location is the secretory vesicle. The protein localises to the cortical granule. It carries out the reaction Hydrolysis of terminal non-reducing N-acetyl-D-hexosamine residues in N-acetyl-beta-D-hexosaminides.. The enzyme catalyses N-acetyl-beta-D-galactosaminyl-(1-&gt;4)-beta-D-3-sulfogalactosyl-(1-&gt;4)-beta-D-glucosyl-(1&lt;-&gt;1')-ceramide + H2O = a beta-D-3-sulfogalactosyl-(1-&gt;4)-beta-D-glucosyl-(1&lt;-&gt;1')-ceramide + N-acetyl-beta-D-galactosamine. The catalysed reaction is a ganglioside GM2 (d18:1(4E)) + H2O = a ganglioside GM3 (d18:1(4E)) + N-acetyl-beta-D-galactosamine. It catalyses the reaction a ganglioside GM2 + H2O = a ganglioside GM3 + N-acetyl-beta-D-galactosamine. It carries out the reaction beta-D-GalNAc-(1-&gt;4)-alpha-L-IdoA-(1-&gt;3)-beta-D-GalNAc-4-sulfate-(1-&gt;4)-alpha-L-IdoA-(1-&gt;3)-D-GalNAc-4-sulfate + H2O = alpha-L-IdoA-(1-&gt;3)-beta-D-GalNAc-4-sulfate-(1-&gt;4)-alpha-L-IdoA-(1-&gt;3)-D-GalNAc-4-sulfate + N-acetyl-D-galactosamine. The enzyme catalyses N-acetyl-beta-D-6-sulfogalactosaminyl-(1-&gt;4)-alpha-L-iduronyl-(1-&gt;3)-N-acetyl-D-6-sulfogalactosamine + H2O = alpha-L-iduronyl-(1-&gt;3)-N-acetyl-D-6-sulfogalactosamine + N-acetyl-D-6-sulfogalactosamine. With respect to regulation, addition of GM2A stimulates the hydrolysis of sulfated glycosphingolipid SM2 and the ganglioside GM2. Functionally, hydrolyzes the non-reducing end N-acetyl-D-hexosamine and/or sulfated N-acetyl-D-hexosamine of glycoconjugates, such as the oligosaccharide moieties from proteins and neutral glycolipids, or from certain mucopolysaccharides. The isozyme B does not hydrolyze each of these substrates, however hydrolyzes efficiently neutral oligosaccharide. Only the isozyme A is responsible for the degradation of GM2 gangliosides in the presence of GM2A. During fertilization is responsible, at least in part, for the zona block to polyspermy. Present in the cortical granules of non-activated oocytes, is exocytosed during the cortical reaction in response to oocyte activation and inactivates the sperm galactosyltransferase-binding site, accounting for the block in sperm binding to the zona pellucida. This chain is Beta-hexosaminidase subunit beta, found in Felis catus (Cat).